Consider the following 325-residue polypeptide: NADH-quinone oxidoreductase subunit H (325 aa).

Transmembrane regions (helical) follow at residues 11 to 31 (ILLT…CGAF), 81 to 101 (VIFT…FAIV), 114 to 134 (IGIL…LFAG), 154 to 174 (LSYE…AGSF), 186 to 206 (VWNV…GVAV), 237 to 257 (FFVG…TLFF), 265 to 285 (LPPF…FILI), and 304 to 324 (ICLP…LWQA).

This sequence belongs to the complex I subunit 1 family. As to quaternary structure, NDH-1 is composed of 13 different subunits. Subunits NuoA, H, J, K, L, M, N constitute the membrane sector of the complex.

The protein localises to the cell inner membrane. The catalysed reaction is a quinone + NADH + 5 H(+)(in) = a quinol + NAD(+) + 4 H(+)(out). In terms of biological role, NDH-1 shuttles electrons from NADH, via FMN and iron-sulfur (Fe-S) centers, to quinones in the respiratory chain. The immediate electron acceptor for the enzyme in this species is believed to be ubiquinone. Couples the redox reaction to proton translocation (for every two electrons transferred, four hydrogen ions are translocated across the cytoplasmic membrane), and thus conserves the redox energy in a proton gradient. This subunit may bind ubiquinone. The protein is NADH-quinone oxidoreductase subunit H of Escherichia coli O139:H28 (strain E24377A / ETEC).